Here is a 272-residue protein sequence, read N- to C-terminus: Hemin import ATP-binding protein HmuV (272 aa).

Residues 2–255 (LNADHLHVAR…EPIARCYGFR (254 aa)) enclose the ABC transporter domain. Position 34 to 41 (34 to 41 (GRNGAGKS)) interacts with ATP.

It belongs to the ABC transporter superfamily. Heme (hemin) importer (TC 3.A.1.14.5) family. In terms of assembly, the complex is composed of two ATP-binding proteins (HmuV), two transmembrane proteins (HmuU) and a solute-binding protein (HmuT).

Its subcellular location is the cell inner membrane. In terms of biological role, part of the ABC transporter complex HmuTUV involved in hemin import. Responsible for energy coupling to the transport system. The polypeptide is Hemin import ATP-binding protein HmuV (Burkholderia mallei (strain ATCC 23344)).